The following is a 71-amino-acid chain: Cell division protein ZapB (71 aa).

A coiled-coil region spans residues 5-67 (LEVLEQLESK…RALLGKMDQM (63 aa)).

It belongs to the ZapB family. As to quaternary structure, homodimer. The ends of the coiled-coil dimer bind to each other, forming polymers. Interacts with FtsZ.

Its subcellular location is the cytoplasm. Functionally, non-essential, abundant cell division factor that is required for proper Z-ring formation. It is recruited early to the divisome by direct interaction with FtsZ, stimulating Z-ring assembly and thereby promoting cell division earlier in the cell cycle. Its recruitment to the Z-ring requires functional FtsA or ZipA. The protein is Cell division protein ZapB of Aeromonas hydrophila subsp. hydrophila (strain ATCC 7966 / DSM 30187 / BCRC 13018 / CCUG 14551 / JCM 1027 / KCTC 2358 / NCIMB 9240 / NCTC 8049).